Reading from the N-terminus, the 234-residue chain is Large ribosomal subunit protein uL1 (234 aa).

The protein belongs to the universal ribosomal protein uL1 family. In terms of assembly, part of the 50S ribosomal subunit.

Binds directly to 23S rRNA. The L1 stalk is quite mobile in the ribosome, and is involved in E site tRNA release. Its function is as follows. Protein L1 is also a translational repressor protein, it controls the translation of the L11 operon by binding to its mRNA. The protein is Large ribosomal subunit protein uL1 of Serratia proteamaculans (strain 568).